Reading from the N-terminus, the 389-residue chain is 5-amino-6-(D-ribitylamino)uracil--L-tyrosine 4-hydroxyphenyl transferase (389 aa).

A Radical SAM core domain is found at 56–298 (VSYVINRNIN…QAVARLFFGR (243 aa)). Positions 70, 74, and 77 each coordinate [4Fe-4S] cluster.

It belongs to the radical SAM superfamily. CofH family. In terms of assembly, consists of two subunits, CofG and CofH. Requires [4Fe-4S] cluster as cofactor.

The enzyme catalyses 5-amino-6-(D-ribitylamino)uracil + L-tyrosine + S-adenosyl-L-methionine = 5-amino-5-(4-hydroxybenzyl)-6-(D-ribitylimino)-5,6-dihydrouracil + 2-iminoacetate + 5'-deoxyadenosine + L-methionine + H(+). It participates in cofactor biosynthesis; coenzyme F0 biosynthesis. Functionally, catalyzes the radical-mediated synthesis of 5-amino-5-(4-hydroxybenzyl)-6-(D-ribitylimino)-5,6-dihydrouracil from 5-amino-6-(D-ribitylamino)uracil and L-tyrosine. This is 5-amino-6-(D-ribitylamino)uracil--L-tyrosine 4-hydroxyphenyl transferase from Gloeobacter violaceus (strain ATCC 29082 / PCC 7421).